The primary structure comprises 466 residues: DNA polymerase delta subunit 3 (466 aa).

An N-acetylalanine modification is found at alanine 2. 2 disordered regions span residues 169-188 (NNELTTNGHGPPASKQVSQQ) and 199-232 (KAAAKTQETNKETKTEAKEVTNASAAGNKAPGKG). Residues 206 to 217 (ETNKETKTEAKE) are compositionally biased toward basic and acidic residues. A Glycyl lysine isopeptide (Lys-Gly) (interchain with G-Cter in SUMO); alternate cross-link involves residue lysine 258. Lysine 258 is covalently cross-linked (Glycyl lysine isopeptide (Lys-Gly) (interchain with G-Cter in SUMO2); alternate). Lysine 261 is covalently cross-linked (Glycyl lysine isopeptide (Lys-Gly) (interchain with G-Cter in SUMO2)). Disordered regions lie at residues 274–393 (KLAT…KTYL) and 406–466 (ESES…FQRK). Threonine 277 is modified (phosphothreonine). A compositionally biased stretch (basic and acidic residues) spans 286 to 296 (KKAEPVKVLQK). Position 307 is a phosphoserine (serine 307). Residues 349 to 361 (PSPPPPPSPPLEP) are compositionally biased toward pro residues. 2 positions are modified to phosphoserine: serine 407 and serine 409. A Phosphothreonine modification is found at threonine 411. Position 413 is a phosphoserine (serine 413). Residues 432–441 (VKKEPREERK) are compositionally biased toward basic and acidic residues. Lysine 433 participates in a covalent cross-link: Glycyl lysine isopeptide (Lys-Gly) (interchain with G-Cter in SUMO); alternate. Lysine 433 is covalently cross-linked (Glycyl lysine isopeptide (Lys-Gly) (interchain with G-Cter in SUMO2); alternate). Positions 455–466 (RQVSITGFFQRK) are enriched in polar residues. Positions 456–463 (QVSITGFF) match the PIP-box motif. Serine 458 is modified (phosphoserine).

In terms of assembly, component of both the DNA polymerase delta and DNA polymerase zeta complexes. The tetrameric DNA polymerase delta complex (Pol-delta4), which consists of POLD1/p125, POLD2/p50, POLD3/p66/p68 and POLD4/p12, with POLD1 bearing DNA polymerase and 3' to 5' proofreading exonuclease activities. Within this complex, directly interacts with POLD2. Following stress caused by DNA damaging agents or by replication stress, POLD4 is degraded and Pol-delta4 is converted into a trimeric form of the complex (Pol-delta3), which consists of POLD1, POLD2 and POLD3. Pol-delta3 is the major form occurring at S phase replication sites, as well as DNA damage sites. Directly interacts with PCNA, as do POLD1 and POLD4; this interaction stimulates Pol-delta polymerase activity. POLD3 phosphorylation at Ser-458 impairs PCNA binding. Component of the DNA polymerase zeta complex (POLZ), which consists of REV3L, MAD2L2, POLD2 and POLD3, with REV3L bearing DNA polymerase catalytic activity. The DNA polymerase delta complex interacts with POLDIP2; this interaction is probably mediated through direct binding to POLD2. Post-translationally, ubiquitinated, but not targeted to the proteasome. Sumoylated. Sumoylation with SUMO3 may be predominant. Phosphorylation at Ser-458 is catalyzed in vitro by PKA. It is thought to decrease the affinity for PCNA and Pol-delta4 processivity. Can also be phosphorylated in vitro by CDK1-cyclin-A complex, as well as CDK2-cyclin-A and CDK2-cyclin-E complexes. PCNA interferes with CDK-cyclin phosphorylation.

Its subcellular location is the cytoplasm. The protein localises to the nucleus. Accessory component of both the DNA polymerase delta complex and the DNA polymerase zeta complex. As a component of the trimeric and tetrameric DNA polymerase delta complexes (Pol-delta3 and Pol-delta4, respectively), plays a role in high fidelity genome replication, including in lagging strand synthesis, and repair. Required for optimal Pol-delta activity. Stabilizes the Pol-delta complex and plays a major role in Pol-delta stimulation by PCNA. Pol-delta3 and Pol-delta4 are characterized by the absence or the presence of POLD4. They exhibit differences in catalytic activity. Most notably, Pol-delta3 shows higher proofreading activity than Pol-delta4. Although both Pol-delta3 and Pol-delta4 process Okazaki fragments in vitro, Pol-delta3 may also be better suited to fulfill this task, exhibiting near-absence of strand displacement activity compared to Pol-delta4 and stalling on encounter with the 5'-blocking oligonucleotides. Pol-delta3 idling process may avoid the formation of a gap, while maintaining a nick that can be readily ligated. Along with DNA polymerase kappa, DNA polymerase delta carries out approximately half of nucleotide excision repair (NER) synthesis following UV irradiation. In this context, POLD3, along with PCNA and RFC1-replication factor C complex, is required to recruit POLD1, the catalytic subunit of the polymerase delta complex, to DNA damage sites. Under conditions of DNA replication stress, required for the repair of broken replication forks through break-induced replication (BIR). Involved in the translesion synthesis (TLS) of templates carrying O6-methylguanine or abasic sites performed by Pol-delta4, independently of DNA polymerase zeta (REV3L) or eta (POLH). Facilitates abasic site bypass by DNA polymerase delta by promoting extension from the nucleotide inserted opposite the lesion. Also involved in TLS, as a component of the tetrameric DNA polymerase zeta complex. Along with POLD2, dramatically increases the efficiency and processivity of DNA synthesis of the DNA polymerase zeta complex compared to the minimal zeta complex, consisting of only REV3L and REV7. This chain is DNA polymerase delta subunit 3 (POLD3), found in Homo sapiens (Human).